A 364-amino-acid polypeptide reads, in one-letter code: DNA replication and repair protein RecF (364 aa).

An ATP-binding site is contributed by 30 to 37 (GENAQGKT).

Belongs to the RecF family.

It is found in the cytoplasm. Its function is as follows. The RecF protein is involved in DNA metabolism; it is required for DNA replication and normal SOS inducibility. RecF binds preferentially to single-stranded, linear DNA. It also seems to bind ATP. In Streptococcus suis (strain 98HAH33), this protein is DNA replication and repair protein RecF.